A 93-amino-acid polypeptide reads, in one-letter code: Toxin RelE1 (93 aa).

This sequence belongs to the RelE toxin family.

Functionally, toxic component of a type II toxin-antitoxin (TA) system. Its toxic effect is neutralized by coexpression with cognate antitoxin RelB1 but no other ParD or RelB antitoxin. The polypeptide is Toxin RelE1 (relE1) (Caulobacter vibrioides (strain ATCC 19089 / CIP 103742 / CB 15) (Caulobacter crescentus)).